The following is an 85-amino-acid chain: Large ribosomal subunit protein bL27 (85 aa).

The segment at 1-22 is disordered; the sequence is MAHKKAGGSTRNGRDSEAKRMG.

This sequence belongs to the bacterial ribosomal protein bL27 family.

In Escherichia coli O6:K15:H31 (strain 536 / UPEC), this protein is Large ribosomal subunit protein bL27.